We begin with the raw amino-acid sequence, 160 residues long: Aspartate carbamoyltransferase regulatory chain (160 aa).

Residues Cys-110, Cys-115, Cys-140, and Cys-143 each contribute to the Zn(2+) site.

Belongs to the PyrI family. As to quaternary structure, contains catalytic and regulatory chains. It depends on Zn(2+) as a cofactor.

Involved in allosteric regulation of aspartate carbamoyltransferase. The protein is Aspartate carbamoyltransferase regulatory chain of Hyperthermus butylicus (strain DSM 5456 / JCM 9403 / PLM1-5).